Reading from the N-terminus, the 544-residue chain is Flagellar hook-associated protein 1 (544 aa).

The protein belongs to the flagella basal body rod proteins family.

The protein localises to the secreted. It localises to the bacterial flagellum. The sequence is that of Flagellar hook-associated protein 1 (flgK) from Buchnera aphidicola subsp. Schizaphis graminum (strain Sg).